We begin with the raw amino-acid sequence, 390 residues long: Protein phosphatase methylesterase 1 (390 aa).

The interval 19–50 (FGLSSLSEDPDESESNSNYFSPTPQPPNELRT) is disordered. In terms of domain architecture, AB hydrolase-1 spans 100–332 (PIFICHHGAG…NLIIGQMQGK (233 aa)). Catalysis depends on residues Ser-186, Asp-213, and His-346.

Belongs to the AB hydrolase superfamily.

It carries out the reaction [phosphatase 2A protein]-C-terminal L-leucine methyl ester + H2O = [phosphatase 2A protein]-C-terminal L-leucine + methanol + H(+). Demethylates proteins that have been reversibly carboxymethylated. Demethylates the phosphatase PP2A catalytic subunit. The protein is Protein phosphatase methylesterase 1 (PPE1) of Debaryomyces hansenii (strain ATCC 36239 / CBS 767 / BCRC 21394 / JCM 1990 / NBRC 0083 / IGC 2968) (Yeast).